The chain runs to 265 residues: Tryptophan synthase alpha chain (265 aa).

Residues Glu48 and Asp59 each act as proton acceptor in the active site.

Belongs to the TrpA family. In terms of assembly, tetramer of two alpha and two beta chains.

The enzyme catalyses (1S,2R)-1-C-(indol-3-yl)glycerol 3-phosphate + L-serine = D-glyceraldehyde 3-phosphate + L-tryptophan + H2O. It participates in amino-acid biosynthesis; L-tryptophan biosynthesis; L-tryptophan from chorismate: step 5/5. Its function is as follows. The alpha subunit is responsible for the aldol cleavage of indoleglycerol phosphate to indole and glyceraldehyde 3-phosphate. This is Tryptophan synthase alpha chain from Vesicomyosocius okutanii subsp. Calyptogena okutanii (strain HA).